The chain runs to 257 residues: Ribosome-associated protein quality control protein P2 (257 aa).

Residues 1–74 (MSDIYQHFRK…RAERKRAILF (74 aa)) form an N-terminal domain region. A central region region spans residues 87–166 (LQAFNVRYAD…EKIDLSDLNI (80 aa)). The region spanning 181-251 (LRLDAVCASM…GKTKKDKWRV (71 aa)) is the S4 RNA-binding domain.

As to quaternary structure, in the presence of chloramphenicol (a translation elongation inhibitor), but not erythromycin or lincomycin, associates with 50S ribosomal subunits with or without a tRNA in the P-site. The S4 domain binds in a similar position to RqcP.

Its subcellular location is the cytoplasm. Functionally, part of the ribosome quality control system (RQC), a ribosome-associated complex that mediates the extraction of incompletely synthesized nascent chains from stalled ribosomes and their subsequent degradation. RqcH recruits Ala-charged tRNA, and with RqcP directs the elongation of stalled nascent chains on 50S ribosomal subunits, leading to non-templated C-terminal alanine extensions (Ala tail). The Ala tail promotes nascent chain degradation. RqcP2 (YlmH) overexpression can compensate for RqcP's role in Ala tailing during RQC, restoring Ala tail addition to peptides in stalled ribosomes. Overexpression complements a double ssrA-rqcP double deletion, but not an ssrA-rqcH double deletion. The majority of tagged protein is associated with tRNA-less 50S subunits, suggesting it might also play a role in late stage 50S subunit biogenesis. In Bacillus subtilis (strain 168), this protein is Ribosome-associated protein quality control protein P2.